Here is a 241-residue protein sequence, read N- to C-terminus: Peptidoglycan endopeptidase RipB (241 aa).

The N-terminal stretch at 1–31 (MRHTRFHPIKLAWITAVVAGLMVGVATPADA) is a signal peptide. In terms of domain architecture, NlpC/P60 spans 109–241 (RQAVEYVIRR…TPFVTRIIEY (133 aa)). The active-site Nucleophile is the Cys-152. His-201 serves as the catalytic Proton acceptor. Glu-213 is an active-site residue.

This sequence belongs to the peptidase C40 family. In terms of assembly, monomer.

In terms of biological role, peptidoglycan endopeptidase that cleaves the bond between D-glutamate and meso-diaminopimelate. Binds high-molecular weight peptidoglycan, but does not degrade it. Required for normal separation of daughter cells after cell division and cell wall integrity. Required for host cell invasion. This Mycobacterium tuberculosis (strain CDC 1551 / Oshkosh) protein is Peptidoglycan endopeptidase RipB (ripB).